Consider the following 442-residue polypeptide: tRNA modification GTPase MnmE (442 aa).

(6S)-5-formyl-5,6,7,8-tetrahydrofolate-binding residues include R27, E84, and K124. The region spanning 221 to 366 is the TrmE-type G domain; it reads GLHVVIVGAP…LLDALQAFAE (146 aa). GTP contacts are provided by residues 231–236, 250–256, and 275–278; these read NAGKSS, SEEAGTT, and DTAG. 2 residues coordinate Mg(2+): S235 and T256. Residue K442 participates in (6S)-5-formyl-5,6,7,8-tetrahydrofolate binding.

Belongs to the TRAFAC class TrmE-Era-EngA-EngB-Septin-like GTPase superfamily. TrmE GTPase family. Homodimer. Heterotetramer of two MnmE and two MnmG subunits. K(+) is required as a cofactor.

It is found in the cytoplasm. In terms of biological role, exhibits a very high intrinsic GTPase hydrolysis rate. Involved in the addition of a carboxymethylaminomethyl (cmnm) group at the wobble position (U34) of certain tRNAs, forming tRNA-cmnm(5)s(2)U34. The chain is tRNA modification GTPase MnmE from Brucella abortus (strain 2308).